Consider the following 279-residue polypeptide: Pantothenate synthetase (279 aa).

An ATP-binding site is contributed by 26–33; it reads MGNLHEGH. Residue His33 is the Proton donor of the active site. Gln57 contributes to the (R)-pantoate binding site. Gln57 lines the beta-alanine pocket. Residue 144-147 coordinates ATP; it reads GKKD. Gln150 is a (R)-pantoate binding site. ATP-binding positions include Val173 and 181 to 184; that span reads LSSR.

This sequence belongs to the pantothenate synthetase family. In terms of assembly, homodimer.

It is found in the cytoplasm. The enzyme catalyses (R)-pantoate + beta-alanine + ATP = (R)-pantothenate + AMP + diphosphate + H(+). The protein operates within cofactor biosynthesis; (R)-pantothenate biosynthesis; (R)-pantothenate from (R)-pantoate and beta-alanine: step 1/1. Catalyzes the condensation of pantoate with beta-alanine in an ATP-dependent reaction via a pantoyl-adenylate intermediate. The chain is Pantothenate synthetase from Burkholderia orbicola (strain MC0-3).